The primary structure comprises 68 residues: Probable tautomerase HP_0924 (68 aa).

Residue Pro-2 is the Proton acceptor; via imino nitrogen of the active site.

It belongs to the 4-oxalocrotonate tautomerase family.

The protein is Probable tautomerase HP_0924 of Helicobacter pylori (strain ATCC 700392 / 26695) (Campylobacter pylori).